We begin with the raw amino-acid sequence, 400 residues long: MTERVVLAYSGGLDTSVAIGWIGAETGAEVVALAVDVGQGGEDLEAIRQRALTCGAVESIVVDARTEFAESFVAPAIRSNALYMDRYPLISSLSRPIIVKHLVEAAREHGADAIAHGCTGKGNDQVRFEVGVSALAPGLKVLAPVRDSGMTRDKAIAFAEERGLPIDVSKRSPYSIDQNLWGRTAECGILEDPWAQPPEDVFVYSADPTVARTPDEVTISFTDGVPTGLDGRSLSLAELVAELNTRAGAHGVGRIDMIEDRLVGIKSREIYECPAAITLLTAHRDLEDLTLERDVARFKRGVDQRWGEIVYDGLWYSPLKAALDAFVDAASAGVDGDVRLRLAGGVAQVVGRRSPGSLYDHALATYDAGDQFDQGDARGFIELWGLPTKVWAAREQRLNP.

8–16 contacts ATP; that stretch reads AYSGGLDTS. The L-citrulline site is built by tyrosine 87 and serine 92. Glycine 117 is an ATP binding site. 3 residues coordinate L-aspartate: threonine 119, asparagine 123, and aspartate 124. L-citrulline is bound at residue asparagine 123. The L-citrulline site is built by arginine 127, serine 175, glutamate 259, and tyrosine 271.

The protein belongs to the argininosuccinate synthase family. Type 1 subfamily. Homotetramer.

It localises to the cytoplasm. It catalyses the reaction L-citrulline + L-aspartate + ATP = 2-(N(omega)-L-arginino)succinate + AMP + diphosphate + H(+). It functions in the pathway amino-acid biosynthesis; L-arginine biosynthesis; L-arginine from L-ornithine and carbamoyl phosphate: step 2/3. In Frankia alni (strain DSM 45986 / CECT 9034 / ACN14a), this protein is Argininosuccinate synthase.